Reading from the N-terminus, the 298-residue chain is ADP/ATP translocase 1 (298 aa).

At 1 to 7 (MSDQALS) the chain is on the mitochondrial intermembrane side. At serine 2 the chain carries N-acetylserine. The Solcar 1 repeat unit spans residues 6–98 (LSFLKDFLAG…FAFKDKYKQI (93 aa)). Residue serine 7 is modified to Phosphoserine. A helical membrane pass occupies residues 8–37 (FLKDFLAGGVAAAISKTAVAPIERVKLLLQ). Residues 38–74 (VQHASKQISAEKQYKGIIDCVVRIPKEQGFLSFWRGN) are Mitochondrial matrix-facing. Lysine 52 is subject to N6,N6,N6-trimethyllysine. An N6-methyllysine modification is found at lysine 52. A helical membrane pass occupies residues 75–99 (LANVIRYFPTQALNFAFKDKYKQIF). ADP is bound by residues arginine 80 and lysine 92. At 100–109 (LGGVDRHKQF) the chain is on the mitochondrial intermembrane side. A helical transmembrane segment spans residues 110-130 (WRYFAGNLASGGAAGATSLCF). Solcar repeat units follow at residues 111–201 (RYFA…AKGM) and 212–297 (VSWM…IKKF). Over 131–178 (VYPLDFARTRLAADVGKGAAQREFTGLGNCITKIFKSDGLRGLYQGFN) the chain is Mitochondrial matrix. N6-succinyllysine is present on lysine 147. Cysteine 160 is subject to S-nitrosocysteine. A helical transmembrane segment spans residues 179–199 (VSVQGIIIYRAAYFGVYDTAK). The Mitochondrial intermembrane segment spans residues 200-210 (GMLPDPKNVHI). Residues 211 to 231 (IVSWMIAQTVTAVAGLVSYPF) traverse the membrane as a helical segment. Topologically, residues 232–273 (DTVRRRMMMQSGRKGADIMYTGTVDCWRKIAKDEGPKAFFKG) are mitochondrial matrix. Residue arginine 235 coordinates ADP. Residues 235-240 (RRRMMM) are important for transport activity. A Nucleotide carrier signature motif motif is present at residues 235 to 240 (RRRMMM). Residues lysine 245 and lysine 272 each carry the N6-succinyllysine modification. A helical transmembrane segment spans residues 274–291 (AWSNVLRGMGGAFVLVLY). The Mitochondrial intermembrane portion of the chain corresponds to 292-298 (DEIKKFV).

Belongs to the mitochondrial carrier (TC 2.A.29) family. In terms of assembly, monomer. Found in a complex with ARL2, ARL2BP and SLC25A4/ANT1. Interacts with ARL2BP. Interacts with TIMM44; leading to inhibit the presequence translocase TIMM23, thereby promoting stabilization of PINK1. Post-translationally, under cell death induction, transglutaminated by TGM2. Transglutamination leads to formation of covalent cross-links between a glutamine and the epsilon-amino group of a lysine residue, forming polymers. In terms of tissue distribution, detected in heart muscle (at protein level). Detected in heart.

The protein localises to the mitochondrion inner membrane. The protein resides in the membrane. It carries out the reaction ADP(in) + ATP(out) = ADP(out) + ATP(in). The enzyme catalyses H(+)(in) = H(+)(out). The matrix-open state (m-state) is inhibited by the membrane-permeable bongkrekic acid (BKA). The cytoplasmic-open state (c-state) is inhibited by the membrane-impermeable toxic inhibitor carboxyatractyloside (CATR). Proton transporter activity is inhibited by ADP:ATP antiporter activity. In terms of biological role, ADP:ATP antiporter that mediates import of ADP into the mitochondrial matrix for ATP synthesis, and export of ATP out to fuel the cell. Cycles between the cytoplasmic-open state (c-state) and the matrix-open state (m-state): operates by the alternating access mechanism with a single substrate-binding site intermittently exposed to either the cytosolic (c-state) or matrix (m-state) side of the inner mitochondrial membrane. In addition to its ADP:ATP antiporter activity, also involved in mitochondrial uncoupling and mitochondrial permeability transition pore (mPTP) activity. Plays a role in mitochondrial uncoupling by acting as a proton transporter: proton transport uncouples the proton flows via the electron transport chain and ATP synthase to reduce the efficiency of ATP production and cause mitochondrial thermogenesis. Proton transporter activity is inhibited by ADP:ATP antiporter activity, suggesting that SLC25A4/ANT1 acts as a master regulator of mitochondrial energy output by maintaining a delicate balance between ATP production (ADP:ATP antiporter activity) and thermogenesis (proton transporter activity). Proton transporter activity requires free fatty acids as cofactor, but does not transport it. Probably mediates mitochondrial uncoupling in tissues that do not express UCP1. Also plays a key role in mPTP opening, a non-specific pore that enables free passage of the mitochondrial membranes to solutes of up to 1.5 kDa, and which contributes to cell death. It is however unclear if SLC25A4/ANT1 constitutes a pore-forming component of mPTP or regulates it. Acts as a regulator of mitophagy independently of ADP:ATP antiporter activity: promotes mitophagy via interaction with TIMM44, leading to inhibit the presequence translocase TIMM23, thereby promoting stabilization of PINK1. The sequence is that of ADP/ATP translocase 1 from Bos taurus (Bovine).